The following is a 121-amino-acid chain: MRFTKDHEWVIVEGDVATVGITAYAAEQLGDVVFVETPEAGKVVKQGEGLAVVESVKAASDVYAPVSGEVIEGNGELAGAPETVNALPESGGWFAKIKLANPAELDALMDRDAYEAFLGTL.

Residues 16–98 form the Lipoyl-binding domain; the sequence is VATVGITAYA…ESGGWFAKIK (83 aa). At K57 the chain carries N6-lipoyllysine.

The protein belongs to the GcvH family. The glycine cleavage system is composed of four proteins: P, T, L and H. The cofactor is (R)-lipoate.

The glycine cleavage system catalyzes the degradation of glycine. The H protein shuttles the methylamine group of glycine from the P protein to the T protein. This Caulobacter vibrioides (strain NA1000 / CB15N) (Caulobacter crescentus) protein is Glycine cleavage system H protein.